The following is an 867-amino-acid chain: Glutamate receptor 1.2 (867 aa).

The N-terminal stretch at 1–27 is a signal peptide; that stretch reads MVRICIQTPILLSFLLVLLFFISNCFA. Residues 28–560 are Extracellular-facing; it reads SSQNNDDDKR…SMWVFFQPLT (533 aa). Residues Asn301, Asn400, Asn496, and Asn499 are each glycosylated (N-linked (GlcNAc...) asparagine). Residues 561–581 traverse the membrane as a helical segment; it reads PNLWITSAAFFVLTGIIVWLI. Residues 582–590 lie on the Cytoplasmic side of the membrane; sequence ERAENKEFQ. A helical membrane pass occupies residues 591-611; that stretch reads GSWPQQIGVVIWFGFSTLVYA. Residues 612 to 622 lie on the Cytoplasmic side of the membrane; sequence HREKLQHNLSR. A helical membrane pass occupies residues 623–643; it reads FVVTVWVFAVLILVTSYTATL. Over 644 to 792 the chain is Extracellular; sequence TSMMTVQQIR…NPITLYRFRG (149 aa). 4 N-linked (GlcNAc...) asparagine glycosylation sites follow: Asn676, Asn688, Asn699, and Asn748. The helical transmembrane segment at 793–813 threads the bilayer; that stretch reads LFMITGVSFAFALAVLLILWL. Over 814–867 the chain is Cytoplasmic; the sequence is RERWEILVNSVNIYFSQRLRHFRILFTRTIHPSPLGLDNPIGENAVQMAQRNRR.

Belongs to the glutamate-gated ion channel (TC 1.A.10.1) family. As to quaternary structure, may form heteromers. Expressed predominantly in roots and siliques.

The protein resides in the membrane. Its function is as follows. Glutamate-gated receptor that probably acts as a non-selective cation channel. May be involved in light-signal transduction and calcium homeostasis via the regulation of calcium influx into cells. The protein is Glutamate receptor 1.2 (GLR1.2) of Arabidopsis thaliana (Mouse-ear cress).